Here is a 321-residue protein sequence, read N- to C-terminus: Ribosomal RNA small subunit methyltransferase H (321 aa).

S-adenosyl-L-methionine contacts are provided by residues 29–31, Asp-48, Tyr-76, Asp-97, and Gln-104; that span reads GGH. The interval 277–321 is disordered; sequence LTRGAEPASETEKAENPRAASVRLRAVERTAPNPDHTRKPTGGAS.

The protein belongs to the methyltransferase superfamily. RsmH family.

It is found in the cytoplasm. It carries out the reaction cytidine(1402) in 16S rRNA + S-adenosyl-L-methionine = N(4)-methylcytidine(1402) in 16S rRNA + S-adenosyl-L-homocysteine + H(+). In terms of biological role, specifically methylates the N4 position of cytidine in position 1402 (C1402) of 16S rRNA. The polypeptide is Ribosomal RNA small subunit methyltransferase H (Frankia casuarinae (strain DSM 45818 / CECT 9043 / HFP020203 / CcI3)).